The sequence spans 325 residues: Melanocortin receptor 5 (325 aa).

Over 1–37 the chain is Extracellular; sequence MNSSSTLTVLNLTLNASEDGILGSNVKNKSLACEEMG. N-linked (GlcNAc...) asparagine glycans are attached at residues Asn2, Asn11, Asn15, and Asn28. The chain crosses the membrane as a helical span at residues 38–61; sequence IAVEVFLTLGLVSLLENILVIGAI. At 62–73 the chain is on the cytoplasmic side; the sequence is VKNKNLHSPMYF. The helical transmembrane segment at 74–97 threads the bilayer; it reads FVGSLAVADMLVSMSNAWETVTIY. At 98–114 the chain is on the extracellular side; that stretch reads LLNNKHLVIADTFVRHI. The helical transmembrane segment at 115 to 138 threads the bilayer; sequence DNVFDSMICISVVASMCSLLAIAV. The Cytoplasmic segment spans residues 139–155; sequence DRYITIFYALRYHHIMT. Residues 156-179 traverse the membrane as a helical segment; sequence ARRSGVIIACIWTFCISCGIVFII. Residues 180–186 lie on the Extracellular side of the membrane; the sequence is YYESKYV. Residues 187-211 form a helical membrane-spanning segment; it reads IICLISMFFTMLFFMVSLYIHMFLL. Residues 212 to 239 lie on the Cytoplasmic side of the membrane; that stretch reads ARNHVKRIAASPRYNSVRQRTSMKGAIT. Residues 240 to 265 form a helical membrane-spanning segment; the sequence is LTMLLGIFIVCWSPFFLHLILMISCP. Residues 266–273 lie on the Extracellular side of the membrane; sequence QNVYCSCF. A helical membrane pass occupies residues 274-297; it reads MSYFNMYLILIMCNSVIDPLIYAL. The Cytoplasmic segment spans residues 298 to 325; it reads RSQEMRRTFKEIVCCHGFRRPCRLLGGY. Residues Cys311 and Cys312 are each lipidated (S-palmitoyl cysteine).

Belongs to the G-protein coupled receptor 1 family. As to expression, skin, adrenal gland, skeletal muscle, bone marrow, spleen, thymus, gonads, uterus and brain.

The protein resides in the cell membrane. Functionally, receptor for MSH (alpha, beta and gamma) and ACTH. The activity of this receptor is mediated by G proteins which activate adenylate cyclase. This receptor is a possible mediator of the immunomodulation properties of melanocortins. The sequence is that of Melanocortin receptor 5 (Mc5r) from Mus musculus (Mouse).